The sequence spans 375 residues: Queuine tRNA-ribosyltransferase (375 aa).

Asp89 serves as the catalytic Proton acceptor. Substrate-binding positions include 89 to 93, Asp143, Gln187, and Gly214; that span reads DSGGF. The RNA binding stretch occupies residues 245-251; that stretch reads GVGKPED. Asp264 serves as the catalytic Nucleophile. The tract at residues 269–273 is RNA binding; important for wobble base 34 recognition; it reads TRNAR. Residues Cys302, Cys304, Cys307, and His333 each coordinate Zn(2+).

The protein belongs to the queuine tRNA-ribosyltransferase family. As to quaternary structure, homodimer. Within each dimer, one monomer is responsible for RNA recognition and catalysis, while the other monomer binds to the replacement base PreQ1. Requires Zn(2+) as cofactor.

The enzyme catalyses 7-aminomethyl-7-carbaguanine + guanosine(34) in tRNA = 7-aminomethyl-7-carbaguanosine(34) in tRNA + guanine. It participates in tRNA modification; tRNA-queuosine biosynthesis. Functionally, catalyzes the base-exchange of a guanine (G) residue with the queuine precursor 7-aminomethyl-7-deazaguanine (PreQ1) at position 34 (anticodon wobble position) in tRNAs with GU(N) anticodons (tRNA-Asp, -Asn, -His and -Tyr). Catalysis occurs through a double-displacement mechanism. The nucleophile active site attacks the C1' of nucleotide 34 to detach the guanine base from the RNA, forming a covalent enzyme-RNA intermediate. The proton acceptor active site deprotonates the incoming PreQ1, allowing a nucleophilic attack on the C1' of the ribose to form the product. After dissociation, two additional enzymatic reactions on the tRNA convert PreQ1 to queuine (Q), resulting in the hypermodified nucleoside queuosine (7-(((4,5-cis-dihydroxy-2-cyclopenten-1-yl)amino)methyl)-7-deazaguanosine). In Enterobacter sp. (strain 638), this protein is Queuine tRNA-ribosyltransferase.